A 130-amino-acid chain; its full sequence is Gonadotropin subunit beta-1 (130 aa).

The N-terminal stretch at 1 to 18 is a signal peptide; it reads MRMRFVVMVILLPALMMS. Intrachain disulfides connect cysteine 26–cysteine 74, cysteine 40–cysteine 89, cysteine 51–cysteine 105, cysteine 55–cysteine 107, and cysteine 110–cysteine 117. A glycan (N-linked (GlcNAc...) asparagine) is linked at asparagine 30.

The protein belongs to the glycoprotein hormones subunit beta family. As to quaternary structure, heterodimer of an alpha and a beta chain.

The protein localises to the secreted. Functionally, involved in gametogenesis and steroidogenesis. This chain is Gonadotropin subunit beta-1 (cgba), found in Carassius auratus (Goldfish).